We begin with the raw amino-acid sequence, 387 residues long: Ferrochelatase (387 aa).

Fe cation-binding residues include His-196 and Glu-277.

This sequence belongs to the ferrochelatase family.

It is found in the cytoplasm. The catalysed reaction is heme b + 2 H(+) = protoporphyrin IX + Fe(2+). It participates in porphyrin-containing compound metabolism; protoheme biosynthesis; protoheme from protoporphyrin-IX: step 1/1. Catalyzes the ferrous insertion into protoporphyrin IX. The protein is Ferrochelatase of Trichodesmium erythraeum (strain IMS101).